Here is a 277-residue protein sequence, read N- to C-terminus: Glycerol-3-phosphate acyltransferase (277 aa).

The next 5 membrane-spanning stretches (helical) occupy residues 3–23 (LFIF…AIIV), 55–75 (IMVM…AKLL), 79–99 (PVTV…PVFF), 111–131 (IGAL…TWLL), and 155–175 (LILV…ILVL). Residues 207–277 (SPATSAEQEF…PKTKTVKEKE (71 aa)) are disordered. The segment covering 216 to 239 (FPGKEVIDTNIDETEKTEQAEAVK) has biased composition (basic and acidic residues). 2 stretches are compositionally biased toward basic residues: residues 240 to 253 (KPKA…AKKT) and 262 to 271 (KPRSTKPKTK).

This sequence belongs to the PlsY family. Probably interacts with PlsX.

It is found in the cell inner membrane. The enzyme catalyses an acyl phosphate + sn-glycerol 3-phosphate = a 1-acyl-sn-glycero-3-phosphate + phosphate. It functions in the pathway lipid metabolism; phospholipid metabolism. Catalyzes the transfer of an acyl group from acyl-phosphate (acyl-PO(4)) to glycerol-3-phosphate (G3P) to form lysophosphatidic acid (LPA). This enzyme utilizes acyl-phosphate as fatty acyl donor, but not acyl-CoA or acyl-ACP. In Legionella pneumophila (strain Paris), this protein is Glycerol-3-phosphate acyltransferase.